We begin with the raw amino-acid sequence, 534 residues long: 2,3-bisphosphoglycerate-independent phosphoglycerate mutase (534 aa).

Residues aspartate 15 and serine 65 each contribute to the Mn(2+) site. Serine 65 functions as the Phosphoserine intermediate in the catalytic mechanism. Residues histidine 126, arginine 156–aspartate 157, arginine 188, arginine 194, arginine 261–arginine 264, and lysine 334 each bind substrate. Mn(2+)-binding residues include aspartate 401, histidine 405, aspartate 442, histidine 443, and histidine 460.

The protein belongs to the BPG-independent phosphoglycerate mutase family. It depends on Mn(2+) as a cofactor.

The protein localises to the plastid. It localises to the chloroplast. The catalysed reaction is (2R)-2-phosphoglycerate = (2R)-3-phosphoglycerate. The protein operates within carbohydrate degradation; glycolysis; pyruvate from D-glyceraldehyde 3-phosphate: step 3/5. Its function is as follows. Catalyzes the interconversion of 2-phosphoglycerate and 3-phosphoglycerate. This Pyropia yezoensis (Susabi-nori) protein is 2,3-bisphosphoglycerate-independent phosphoglycerate mutase.